Consider the following 439-residue polypeptide: GTPase Der (439 aa).

EngA-type G domains lie at P3–S167 and T176–S351. GTP contacts are provided by residues G9–S16, D56–F60, N119–D122, G182–S189, D229–I233, and N294–D297. Residues K352–D436 form the KH-like domain.

It belongs to the TRAFAC class TrmE-Era-EngA-EngB-Septin-like GTPase superfamily. EngA (Der) GTPase family. In terms of assembly, associates with the 50S ribosomal subunit.

Functionally, GTPase that plays an essential role in the late steps of ribosome biogenesis. This chain is GTPase Der, found in Geobacter metallireducens (strain ATCC 53774 / DSM 7210 / GS-15).